A 1060-amino-acid chain; its full sequence is Carbamoyl phosphate synthase large chain (1060 aa).

The tract at residues 1–400 is carboxyphosphate synthetic domain; it reads MPRDESINKV…SLNKAIRSLD (400 aa). Residues Arg-127, Arg-167, Gly-173, Gly-174, Gln-206, Val-208, Glu-213, Gly-240, Ile-241, His-242, Gln-283, and Glu-297 each coordinate ATP. The region spanning 131 to 326 is the ATP-grasp 1 domain; sequence DSFMKKLNEP…IAKIAAKIAV (196 aa). The Mg(2+) site is built by Gln-283, Glu-297, and Asn-299. Mn(2+)-binding residues include Gln-283, Glu-297, and Asn-299. Residues 401 to 539 are oligomerization domain; sequence IGADGFTETP…YGCYDLEDEV (139 aa). Positions 540–926 are carbamoyl phosphate synthetic domain; the sequence is EVSDRRKVLI…YKSQLSASMD (387 aa). One can recognise an ATP-grasp 2 domain in the interval 664 to 858; sequence TEVLNKLGIP…LAKMAARLMM (195 aa). Positions 700, 739, 741, 746, 771, 772, 773, 774, 814, and 829 each coordinate ATP. Mg(2+) contacts are provided by Gln-814, Glu-829, and Asn-831. Gln-814, Glu-829, and Asn-831 together coordinate Mn(2+). The MGS-like domain maps to 925–1060; sequence MDLLNEGKVF…VKSLDEYHGM (136 aa). An allosteric domain region spans residues 927–1060; it reads LLNEGKVFIS…VKSLDEYHGM (134 aa).

The protein belongs to the CarB family. As to quaternary structure, composed of two chains; the small (or glutamine) chain promotes the hydrolysis of glutamine to ammonia, which is used by the large (or ammonia) chain to synthesize carbamoyl phosphate. Tetramer of heterodimers (alpha,beta)4. The cofactor is Mg(2+). Mn(2+) serves as cofactor.

It carries out the reaction hydrogencarbonate + L-glutamine + 2 ATP + H2O = carbamoyl phosphate + L-glutamate + 2 ADP + phosphate + 2 H(+). It catalyses the reaction hydrogencarbonate + NH4(+) + 2 ATP = carbamoyl phosphate + 2 ADP + phosphate + 2 H(+). The protein operates within amino-acid biosynthesis; L-arginine biosynthesis; carbamoyl phosphate from bicarbonate: step 1/1. It participates in pyrimidine metabolism; UMP biosynthesis via de novo pathway; (S)-dihydroorotate from bicarbonate: step 1/3. Functionally, large subunit of the glutamine-dependent carbamoyl phosphate synthetase (CPSase). CPSase catalyzes the formation of carbamoyl phosphate from the ammonia moiety of glutamine, carbonate, and phosphate donated by ATP, constituting the first step of 2 biosynthetic pathways, one leading to arginine and/or urea and the other to pyrimidine nucleotides. The large subunit (synthetase) binds the substrates ammonia (free or transferred from glutamine from the small subunit), hydrogencarbonate and ATP and carries out an ATP-coupled ligase reaction, activating hydrogencarbonate by forming carboxy phosphate which reacts with ammonia to form carbamoyl phosphate. This is Carbamoyl phosphate synthase large chain from Methanothermobacter thermautotrophicus (strain ATCC 29096 / DSM 1053 / JCM 10044 / NBRC 100330 / Delta H) (Methanobacterium thermoautotrophicum).